A 1262-amino-acid polypeptide reads, in one-letter code: Putative late blight resistance protein homolog R1B-23 (1262 aa).

2 coiled-coil regions span residues 364–384 (DSLAFLKNQLQVIQTKFESMQ) and 475–496 (RMNEEIVGFEDVIETLRKKLLN). Residues 475-761 (RMNEEIVGFE…ISESFIKSCE (287 aa)) enclose the NB-ARC domain. 508–515 (GMPGLGKT) contributes to the ATP binding site. LRR repeat units lie at residues 890 to 914 (FKFLKVLDLEHQVVIDSIPTELFYL), 933 to 961 (LWNLETLILNRTSAATGKTLLLPSTVWDM), 1036 to 1059 (PIRLEMLKLHQSNIFKPISFCISA), 1064 to 1083 (YLELSGFYLDSQYLSETADH), 1084 to 1112 (LKHLEVLKLYYVEFGDHREWKVSNGMFPQ), and 1133 to 1157 (FPNLEQLVLRRCRHLMEIPSCFMDI). The 68-residue stretch at 1181–1248 (ETQVEDNQNT…KLRNVAYADE (68 aa)) folds into the HMA domain.

The protein belongs to the disease resistance NB-LRR family.

The protein resides in the cytoplasm. The protein localises to the membrane. Functionally, confers resistance to late blight (Phytophthora infestans) races carrying the avirulence gene Avr1. Resistance proteins guard the plant against pathogens that contain an appropriate avirulence protein via an indirect interaction with this avirulence protein. That triggers a defense system including the hypersensitive response, which restricts the pathogen growth. The polypeptide is Putative late blight resistance protein homolog R1B-23 (R1B-23) (Solanum demissum (Wild potato)).